Consider the following 310-residue polypeptide: MRIVFAGTPEFAAEHLKALLDTPHQLVAVYTQPDRPAGRGQKLMPSAVKSLALEHGLPVIQPPSLRSADAQAELAALRPDLMVVVAYGLILPQAVLDIPRLGCINSHASLLPRWRGAAPIQRAVEAGDAQSGVTVMQMEAGLDTGPMLLKVATPIAADDSGGSLHDRLAALGPKAVVEAIAGLAAGTLRGEVQDDALATYAHKLNKDEARLDWSRPAVELERQVRAFTPWPVCHSSLAGASLKVLGASLGHGSGTPGSILEASRDGLLVACGEGALRLTRLQLPGGKPLAFADLYNSRREQFAAGQVLGQ.

109–112 (SLLP) contacts (6S)-5,6,7,8-tetrahydrofolate.

Belongs to the Fmt family.

The enzyme catalyses L-methionyl-tRNA(fMet) + (6R)-10-formyltetrahydrofolate = N-formyl-L-methionyl-tRNA(fMet) + (6S)-5,6,7,8-tetrahydrofolate + H(+). Its function is as follows. Attaches a formyl group to the free amino group of methionyl-tRNA(fMet). The formyl group appears to play a dual role in the initiator identity of N-formylmethionyl-tRNA by promoting its recognition by IF2 and preventing the misappropriation of this tRNA by the elongation apparatus. The sequence is that of Methionyl-tRNA formyltransferase from Pseudomonas paraeruginosa (strain DSM 24068 / PA7) (Pseudomonas aeruginosa (strain PA7)).